The primary structure comprises 596 residues: MKHIRNFSIIAHIDHGKSTLSDRLIQECGGLSDREMAAQVLDSMDIERERGITIKAQSVTLDYKAQDGETYQLNFIDTPGHVDFSYEVSRSLAACEGALLVVDAGQGVEAQTLANCYTALEMDMDVVPVLNKIDLPQADPERVADEIEDIVGIEAADAVRCSAKTGIGIKDVLEVIVAQIPSPEGDPEGPLQALIIDSWFDSYQGVVSLVRIKNGVLRKGDKFKVMSTGQNYNADRVGIFTPKQTDTTELKTGEVGFIIAGIKEIHGAPVGDTLTHAKHGADKPLAGFKKVKPQVYAGLFPISTDDYESFRDALNKLSLNDASLFFEPETSSALGFGFRIGFLGLLHMEIIQERLEREYNLDLITTAPTVVYEIVKTSGETIYVDNPSDLPAINNIEEMREPIVETNILVPKEYLGNVITLCVEKRGVQKNLVYHGNQVALTYELPMAEVVMDFFDRLKSTSRGYASLEYNFIRFEPADMVRLDILINGDRVDALAMIIHKGLIRSKGLALVNKMKELIPRQMFDIAVQAAVGSQIIARSSIKAMRKDVTAKCYGGDVSRKKKLLNKQKEGKKRMKQVGNVEVPQEAFLAVLKLND.

The tr-type G domain maps to 2 to 184 (KHIRNFSIIA…VIVAQIPSPE (183 aa)). Residues 14–19 (DHGKST) and 131–134 (NKID) each bind GTP.

The protein belongs to the TRAFAC class translation factor GTPase superfamily. Classic translation factor GTPase family. LepA subfamily.

The protein resides in the cell inner membrane. The enzyme catalyses GTP + H2O = GDP + phosphate + H(+). Functionally, required for accurate and efficient protein synthesis under certain stress conditions. May act as a fidelity factor of the translation reaction, by catalyzing a one-codon backward translocation of tRNAs on improperly translocated ribosomes. Back-translocation proceeds from a post-translocation (POST) complex to a pre-translocation (PRE) complex, thus giving elongation factor G a second chance to translocate the tRNAs correctly. Binds to ribosomes in a GTP-dependent manner. The protein is Elongation factor 4 of Shewanella sediminis (strain HAW-EB3).